The sequence spans 335 residues: 4-hydroxy-3-methylbut-2-enyl diphosphate reductase 2 (335 aa).

A [4Fe-4S] cluster-binding site is contributed by cysteine 37. 2 residues coordinate (2E)-4-hydroxy-3-methylbut-2-enyl diphosphate: histidine 66 and histidine 99. Dimethylallyl diphosphate is bound by residues histidine 66 and histidine 99. 2 residues coordinate isopentenyl diphosphate: histidine 66 and histidine 99. [4Fe-4S] cluster is bound at residue cysteine 121. Histidine 149 lines the (2E)-4-hydroxy-3-methylbut-2-enyl diphosphate pocket. Histidine 149 contributes to the dimethylallyl diphosphate binding site. Histidine 149 provides a ligand contact to isopentenyl diphosphate. Catalysis depends on glutamate 151, which acts as the Proton donor. Threonine 189 is a (2E)-4-hydroxy-3-methylbut-2-enyl diphosphate binding site. Cysteine 219 serves as a coordination point for [4Fe-4S] cluster. (2E)-4-hydroxy-3-methylbut-2-enyl diphosphate contacts are provided by serine 247, serine 248, asparagine 249, and serine 292. Dimethylallyl diphosphate contacts are provided by serine 247, serine 248, asparagine 249, and serine 292. Positions 247, 248, 249, and 292 each coordinate isopentenyl diphosphate.

It belongs to the IspH family. [4Fe-4S] cluster is required as a cofactor.

It catalyses the reaction isopentenyl diphosphate + 2 oxidized [2Fe-2S]-[ferredoxin] + H2O = (2E)-4-hydroxy-3-methylbut-2-enyl diphosphate + 2 reduced [2Fe-2S]-[ferredoxin] + 2 H(+). It carries out the reaction dimethylallyl diphosphate + 2 oxidized [2Fe-2S]-[ferredoxin] + H2O = (2E)-4-hydroxy-3-methylbut-2-enyl diphosphate + 2 reduced [2Fe-2S]-[ferredoxin] + 2 H(+). It functions in the pathway isoprenoid biosynthesis; dimethylallyl diphosphate biosynthesis; dimethylallyl diphosphate from (2E)-4-hydroxy-3-methylbutenyl diphosphate: step 1/1. It participates in isoprenoid biosynthesis; isopentenyl diphosphate biosynthesis via DXP pathway; isopentenyl diphosphate from 1-deoxy-D-xylulose 5-phosphate: step 6/6. In terms of biological role, catalyzes the conversion of 1-hydroxy-2-methyl-2-(E)-butenyl 4-diphosphate (HMBPP) into a mixture of isopentenyl diphosphate (IPP) and dimethylallyl diphosphate (DMAPP). Acts in the terminal step of the DOXP/MEP pathway for isoprenoid precursor biosynthesis. Has a higher activity compared with LytB2. Is essential for M.tuberculosis growth in vitro. In Mycobacterium tuberculosis (strain ATCC 25618 / H37Rv), this protein is 4-hydroxy-3-methylbut-2-enyl diphosphate reductase 2.